The primary structure comprises 193 residues: dCTP deaminase (193 aa).

Residues 110-115, aspartate 128, 136-138, tyrosine 171, lysine 178, and glutamine 182 contribute to the dCTP site; these read RSSLAR and VLE. Catalysis depends on glutamate 138, which acts as the Proton donor/acceptor. The segment at 169–193 is disordered; sequence RPYNRRQDAKYKDQQGAVASRIDKD.

This sequence belongs to the dCTP deaminase family. As to quaternary structure, homotrimer.

It catalyses the reaction dCTP + H2O + H(+) = dUTP + NH4(+). Its pathway is pyrimidine metabolism; dUMP biosynthesis; dUMP from dCTP (dUTP route): step 1/2. Its function is as follows. Catalyzes the deamination of dCTP to dUTP. This is dCTP deaminase from Pectobacterium atrosepticum (strain SCRI 1043 / ATCC BAA-672) (Erwinia carotovora subsp. atroseptica).